We begin with the raw amino-acid sequence, 361 residues long: Cilia- and flagella-associated protein 263 (361 aa).

It belongs to the CFAP263 family. Forms a complex with CFAP184; the interaction is required for functional activity in cilia.

It localises to the cell projection. The protein localises to the cilium. Functionally, in complex with CFAP263, acts as a regulator of ciliary beating that connects radial spoke 3 (RS3) to the inner dynein arm (IDA) and the nexin-dynein regulatory complex (N-DRC). The complex is positioned parallel to N-DRC and forms a connection between the arch at the base of RS3, the IDA tail and N-DRC. This chain is Cilia- and flagella-associated protein 263 (CFAP263), found in Tetrahymena thermophila (strain SB210).